Consider the following 532-residue polypeptide: Membrane protein insertase YidC (532 aa).

Transmembrane regions (helical) follow at residues 6 to 26 (IVLA…FAEY), 317 to 337 (AIDF…LTFF), 342 to 362 (GNWG…FWPL), 411 to 431 (GGCL…QALL), 451 to 473 (VWLA…GASM), and 496 to 516 (PIIF…YWLF).

Belongs to the OXA1/ALB3/YidC family. Type 1 subfamily. In terms of assembly, interacts with the Sec translocase complex via SecD. Specifically interacts with transmembrane segments of nascent integral membrane proteins during membrane integration.

It localises to the cell membrane. Functionally, required for the insertion and/or proper folding and/or complex formation of integral membrane proteins into the membrane. Involved in integration of membrane proteins that insert both dependently and independently of the Sec translocase complex, as well as at least some lipoproteins. Aids folding of multispanning membrane proteins. The protein is Membrane protein insertase YidC of Lawsonia intracellularis (strain PHE/MN1-00).